Reading from the N-terminus, the 100-residue chain is uncharacterized protein (100 aa).

Residues 1–26 (MKRLLVSLRVWMVFLMNWVTPDRKTA) form the signal peptide.

This is an uncharacterized protein from Bacillus subtilis (strain 168).